The primary structure comprises 424 residues: 2,3-bisphosphoglycerate-independent phosphoglycerate mutase (424 aa).

Belongs to the BPG-independent phosphoglycerate mutase family. A-PGAM subfamily.

It carries out the reaction (2R)-2-phosphoglycerate = (2R)-3-phosphoglycerate. It participates in carbohydrate degradation; glycolysis; pyruvate from D-glyceraldehyde 3-phosphate: step 3/5. Functionally, catalyzes the interconversion of 2-phosphoglycerate and 3-phosphoglycerate. This is 2,3-bisphosphoglycerate-independent phosphoglycerate mutase from Aeropyrum pernix (strain ATCC 700893 / DSM 11879 / JCM 9820 / NBRC 100138 / K1).